The following is a 709-amino-acid chain: PP2C-like domain-containing protein CG9801 (709 aa).

3 disordered regions span residues 121-222 (DCYG…NSER), 503-530 (LHPSTPPTRPARQSKAESPPNNAPSRPK), and 678-709 (GGGEEHNNGNENGDGGAISPVLQSKEFKETNF). Over residues 130–143 (PPVQVATQNSTRLT) the composition is skewed to polar residues. A compositionally biased stretch (low complexity) spans 182–196 (ANLAAASAGTDAGKA). A compositionally biased stretch (polar residues) spans 197–217 (NSDQNNRNVLNAKTEVSTDGD). The 245-residue stretch at 259 to 503 (SVSLYETNML…KSASAIYARL (245 aa)) folds into the PPM-type phosphatase domain.

In Drosophila melanogaster (Fruit fly), this protein is PP2C-like domain-containing protein CG9801.